A 194-amino-acid chain; its full sequence is Probable nicotinate-nucleotide adenylyltransferase (194 aa).

Belongs to the NadD family.

It catalyses the reaction nicotinate beta-D-ribonucleotide + ATP + H(+) = deamido-NAD(+) + diphosphate. Its pathway is cofactor biosynthesis; NAD(+) biosynthesis; deamido-NAD(+) from nicotinate D-ribonucleotide: step 1/1. Its function is as follows. Catalyzes the reversible adenylation of nicotinate mononucleotide (NaMN) to nicotinic acid adenine dinucleotide (NaAD). This chain is Probable nicotinate-nucleotide adenylyltransferase, found in Chlorobium luteolum (strain DSM 273 / BCRC 81028 / 2530) (Pelodictyon luteolum).